The sequence spans 126 residues: Large ribosomal subunit protein bL20 (126 aa).

Belongs to the bacterial ribosomal protein bL20 family.

In terms of biological role, binds directly to 23S ribosomal RNA and is necessary for the in vitro assembly process of the 50S ribosomal subunit. It is not involved in the protein synthesizing functions of that subunit. In Acholeplasma laidlawii (strain PG-8A), this protein is Large ribosomal subunit protein bL20.